A 191-amino-acid chain; its full sequence is Sec-independent protein translocase protein TatB (191 aa).

A helical transmembrane segment spans residues 1–21; the sequence is MFDIGFSELFLILVIGLLVLG. Residues 119-138 show a composition bias toward polar residues; the sequence is ESTSQTLTEQLTPSEQVTEA. Disordered stretches follow at residues 119 to 139 and 168 to 191; these read ESTSQTLTEQLTPSEQVTEAT and DDDDEPVFASKVKPQTEEIQDKKA. Residues 181-191 are compositionally biased toward basic and acidic residues; that stretch reads PQTEEIQDKKA.

Belongs to the TatB family. As to quaternary structure, the Tat system comprises two distinct complexes: a TatABC complex, containing multiple copies of TatA, TatB and TatC subunits, and a separate TatA complex, containing only TatA subunits. Substrates initially bind to the TatABC complex, which probably triggers association of the separate TatA complex to form the active translocon.

It is found in the cell inner membrane. Its function is as follows. Part of the twin-arginine translocation (Tat) system that transports large folded proteins containing a characteristic twin-arginine motif in their signal peptide across membranes. Together with TatC, TatB is part of a receptor directly interacting with Tat signal peptides. TatB may form an oligomeric binding site that transiently accommodates folded Tat precursor proteins before their translocation. The polypeptide is Sec-independent protein translocase protein TatB (Pasteurella multocida (strain Pm70)).